The following is a 330-amino-acid chain: MTKTYTKAKEMAELVGTQGWMDDALSSKDELKAENGRPGPFGLVAGLNEEHDSIEEEEEEEDDGEKPKRRGPKKKKMTKARLERFRARRVKANARERTRMHGLNDALDNLRRVMPCYSKTQKLSKIETLRLARNYIWALSEVLETGQTPEGKSFVEMLCKGLSQPTSNLVAGCLQLGPQTLFLEKHEEKTPGCESAISSHSFTYQSPGLPSPPYGSMETHLLHLKPPAFKSLVDASFGNPPDCTTPPYEGPLTPPLSISGNFSLKQDGSPDLDKPYAFMAHYPSVSLAGAHGHPTHFQNAVPRYEIPIDMSYESYPHHVAGPQLNAIFNE.

Residues 1 to 79 (MTKTYTKAKE…RGPKKKKMTK (79 aa)) are disordered. The span at 25-35 (LSSKDELKAEN) shows a compositional bias: basic and acidic residues. Acidic residues predominate over residues 52–64 (DSIEEEEEEEDDG). A compositionally biased stretch (basic residues) spans 67 to 79 (PKRRGPKKKKMTK). The short motif at 73-79 (KKKKMTK) is the Nuclear localization signal element. Residues 87 to 139 (ARRVKANARERTRMHGLNDALDNLRRVMPCYSKTQKLSKIETLRLARNYIWAL) enclose the bHLH domain. The tract at residues 162-183 (LSQPTSNLVAGCLQLGPQTLFL) is leucine-zipper.

Efficient DNA binding requires dimerization with another bHLH protein. In terms of processing, serine or threonine phosphorylation within the basic region may regulate neurogenic activity. In terms of tissue distribution, expressed in both the developing central nervous system and peripheral nervous system.

The protein resides in the nucleus. Functionally, probably acts as a transcriptional activator. Mediates neuronal differentiation. Required for the regulation of amacrine cell fate specification in the retina. This Gallus gallus (Chicken) protein is Neurogenic differentiation factor 4 (NEUROD4).